The chain runs to 341 residues: UDP-3-O-acylglucosamine N-acyltransferase (341 aa).

Residue histidine 240 is the Proton acceptor of the active site.

Belongs to the transferase hexapeptide repeat family. LpxD subfamily. Homotrimer.

The catalysed reaction is a UDP-3-O-[(3R)-3-hydroxyacyl]-alpha-D-glucosamine + a (3R)-hydroxyacyl-[ACP] = a UDP-2-N,3-O-bis[(3R)-3-hydroxyacyl]-alpha-D-glucosamine + holo-[ACP] + H(+). The protein operates within bacterial outer membrane biogenesis; LPS lipid A biosynthesis. Catalyzes the N-acylation of UDP-3-O-acylglucosamine using 3-hydroxyacyl-ACP as the acyl donor. Is involved in the biosynthesis of lipid A, a phosphorylated glycolipid that anchors the lipopolysaccharide to the outer membrane of the cell. The protein is UDP-3-O-acylglucosamine N-acyltransferase of Cellvibrio japonicus (strain Ueda107) (Pseudomonas fluorescens subsp. cellulosa).